A 1226-amino-acid polypeptide reads, in one-letter code: Receptor-type tyrosine-protein phosphatase O (1226 aa).

The first 29 residues, 1 to 29 (MGHLPRGTLGGRRLLPLLGLFVLLKIVTT), serve as a signal peptide directing secretion. One can recognise a Fibronectin type-III 1 domain in the interval 30-115 (FHVAVQDDNN…TKPSRSITVL (86 aa)). Residues 30–832 (FHVAVQDDNN…VTEVNPNVVV (803 aa)) lie on the Extracellular side of the membrane. Asn-75, Asn-154, and Asn-227 each carry an N-linked (GlcNAc...) asparagine glycan. The tract at residues 242-305 (EPSGSFPEDS…PNSTDYESTS (64 aa)) is disordered. Residues 260–270 (IGRDRRFHFPE) show a composition bias toward basic and acidic residues. Positions 277 to 291 (PSNVSSGSPPSNVSS) are enriched in low complexity. Asn-279 carries an N-linked (GlcNAc...) asparagine glycan. A compositionally biased stretch (polar residues) spans 296–305 (PNSTDYESTS). 5 consecutive Fibronectin type-III domains span residues 339-435 (RTEK…ISPT), 445-541 (KPQH…IVPT), 542-638 (GIKD…TISF), 641-734 (APVA…LEPA), and 735-827 (PPKS…TEVN). Residues Asn-471 and Asn-500 are each glycosylated (N-linked (GlcNAc...) asparagine). Asn-710, Asn-743, and Asn-800 each carry an N-linked (GlcNAc...) asparagine glycan. A helical membrane pass occupies residues 833–853 (ISVLAILSTLLIGLLLVTLVI). The Cytoplasmic portion of the chain corresponds to 854–1226 (LRKKHLQMAR…DVIYENVSKS (373 aa)). Ser-875 carries the phosphoserine modification. Positions 948 to 1205 (FSLQFEELKL…IFIHQCVQLM (258 aa)) constitute a Tyrosine-protein phosphatase domain. Residues Asp-1112, 1146 to 1152 (CSAGVGR), and Gln-1190 contribute to the substrate site. Cys-1146 functions as the Phosphocysteine intermediate in the catalytic mechanism. Tyr-1220 bears the Phosphotyrosine mark.

It belongs to the protein-tyrosine phosphatase family. Receptor class 3 subfamily. As to quaternary structure, interacts (phosphorylated form) with FYN and GRB2.

Its subcellular location is the membrane. The enzyme catalyses O-phospho-L-tyrosyl-[protein] + H2O = L-tyrosyl-[protein] + phosphate. Functionally, possesses tyrosine phosphatase activity. Plays a role in regulating the glomerular pressure/filtration rate relationship through an effect on podocyte structure and function. This is Receptor-type tyrosine-protein phosphatase O (Ptpro) from Mus musculus (Mouse).